The sequence spans 1439 residues: MAKEDIEEEREIRNDASENSSDEEGDDVLDSSEEDDDDDDEEAIKRVREGFIVDDDEDESQKRKRRKHKKRKREERTNDDENNALDQDDLELLMENSGARPQPSSNKLKRLKRAYTEDTEGAEEEEIGAKSGRGGLTDIFSDEDNNEEERADLGETRVDDDRNILDEFEDFIEEDEYSDEDEERQRKLTQQRERAQKKGPRLDTSKLSNVDRESLQQLFEVFGNGAEYEWALEAQEMEDEGNGENLEPTSLDEVFEHAELKERMLTEEDNLIRIVDIPERFQKYRANLNYIDLEGEELKSEQGWVANILFMEKQGSFSGFLEEPFKEAVSKVVEFISKDVYEVPFIWTHRRDFLLYSEEIKNEDGSVTNSVHKLLFEDDLWRIFQLDIEYHSLYEKRVNIEKLIESLNLDDDLVKDVKSLETMVAIQDLQDYINFTYSTEIRKLYDDKETEGIDANITKKHSKYAIFERIKSNVLYDAVNAFGISAKEFGENVQDQSSKKFEVPYRIHATDDHIESPEDLIERLCEDDEVLFKDPKNALNAVRKTFAEEIFHNPKIRHEVRTTFKDFASIRVAVTEKGKAIDNHSPYADIKYAINRSPADLVRNPDVLLRMLEAEAAGLVVVKVETKDYDSWFQCIFNCLKSDGSSEIFEKWNKEREFVLNMAFKRLTSMVSMNTKEDLRRECERLIASEVRRRFLARIDQAPFTPFGFDKGTKPNVLALSFGKGDFDSAVIGAFLRESGKVDEFFKSEDNPIRDRESEDKFSGQLKEFFDKNLRNQKPDVIVVSGYNAISKKLFDSVKSFVETNNVTANTEELTDVQNPPLIQVIWGQSETATLFQNSERARIEFSDKPTLAKYCVGLARYVQSPLLEYLSLGEGILSLTFFEHQKLISTDLVMEAIESAYVDIINMVGVEINEAIRDPYIAQLLPYVAGLGPRKASGLLRNINSKLGSTLANRSDLIENELSTANIFINCSSFLNIPYDEGLSMRDSSVELLDATRIHPEDYDLARKMAADALDLDEEDMAHVEEQGGIIYQLMQDGVNKVDDLNLTAYGKELESKFGKKKYATLQSIKEELVNNFEEIRRSFHILESHEVFHMLTGETTESFTRNTIVPVTVNKVGQNFRDFENSKIKFAKVTTSSFIQGNIEEASIPQGIDLAQGQVVQAVVLDAYYDSFTASFSLLEADIQKGAAPKFHKDPLKWNFEAEQADKQKEMAKERAQLAKTRNIQHPLFHNFSYKQAEEFLAPQAVGDCVLRPSSKGPNYLTVTWKVSNNLFQHLSIQENTQGMGKEYIVEHKKYADLDQLIFQHVQAIAKHVDEMCRHPKFREGTMSEVNEWLESYTKANPKNSAYVFCFDHKAPGWFLLLFKVNVNTPITTWHVKTECDGYRLKGFSYPSMLRLCNGFKQTFKSYVKGIADRSRSTKPAPVNNQAQASTYGGYGY.

Basic and acidic residues predominate over residues 1-16 (MAKEDIEEEREIRNDA). A disordered region spans residues 1-206 (MAKEDIEEER…KKGPRLDTSK (206 aa)). Residues 20–42 (SSDEEGDDVLDSSEEDDDDDDEE) are compositionally biased toward acidic residues. The span at 62-73 (KRKRRKHKKRKR) shows a compositional bias: basic residues. Acidic residues-rich tracts occupy residues 77–92 (TNDD…DLEL), 117–126 (EDTEGAEEEE), and 140–150 (FSDEDNNEEER). Residues 151–165 (ADLGETRVDDDRNIL) show a composition bias toward basic and acidic residues. The segment covering 166–182 (DEFEDFIEEDEYSDEDE) has biased composition (acidic residues). Basic and acidic residues predominate over residues 183 to 206 (ERQRKLTQQRERAQKKGPRLDTSK). The SH2 domain maps to 1229–1323 (PLFHNFSYKQ…HVDEMCRHPK (95 aa)). Residues 1417-1439 (SRSTKPAPVNNQAQASTYGGYGY) are disordered.

Belongs to the SPT6 family.

The protein localises to the nucleus. Its subcellular location is the chromosome. In terms of biological role, histone H3-H4 chaperone that plays a role in maintenance of chromatin structure during RNA polymerase II transcription elongation thereby repressing transcription initiation from cryptic promoters. Mediates the reassembly of nucleosomes onto the promoters of at least a selected set of genes during repression; the nucleosome reassembly is essential for transcriptional repression. Essential for viability. The sequence is that of Transcription elongation factor SPT6 (SPT6) from Debaryomyces hansenii (strain ATCC 36239 / CBS 767 / BCRC 21394 / JCM 1990 / NBRC 0083 / IGC 2968) (Yeast).